Consider the following 136-residue polypeptide: Monothiol glutaredoxin-S3 (136 aa).

The Glutaredoxin domain occupies 18–135 (EREVRRAVEE…PVLKQAGALW (118 aa)). Position 38 (cysteine 38) interacts with [2Fe-2S] cluster. Positions 133–136 (ALWL) match the Responsive for interaction with TGA factors motif.

Belongs to the glutaredoxin family. CC-type subfamily.

It localises to the cytoplasm. It is found in the nucleus. Its function is as follows. May only reduce GSH-thiol disulfides, but not protein disulfides. In Oryza sativa subsp. japonica (Rice), this protein is Monothiol glutaredoxin-S3 (GRXS3).